Here is a 322-residue protein sequence, read N- to C-terminus: Cysteine synthase (322 aa).

Asparagine 8 and arginine 35 together coordinate hydrogen sulfide. Lysine 42 carries the N6-(pyridoxal phosphate)lysine modification. Pyridoxal 5'-phosphate is bound by residues asparagine 72 and glycine 177–threonine 181. Residue leucine 269 participates in hydrogen sulfide binding. Serine 273 is a binding site for pyridoxal 5'-phosphate.

This sequence belongs to the cysteine synthase/cystathionine beta-synthase family. As to quaternary structure, homodimer. Requires pyridoxal 5'-phosphate as cofactor.

It carries out the reaction O-acetyl-L-serine + hydrogen sulfide = L-cysteine + acetate. Its pathway is amino-acid biosynthesis; L-cysteine biosynthesis; L-cysteine from L-serine: step 2/2. This chain is Cysteine synthase (cysK), found in Buchnera aphidicola subsp. Schizaphis graminum (strain Sg).